We begin with the raw amino-acid sequence, 459 residues long: Cysteine--tRNA ligase (459 aa).

C28 provides a ligand contact to Zn(2+). The short motif at 30–40 (VTVYDLCHIGH) is the 'HIGH' region element. Positions 209, 234, and 238 each coordinate Zn(2+). Positions 266 to 270 (KMSKS) match the 'KMSKS' region motif. K269 is a binding site for ATP.

The protein belongs to the class-I aminoacyl-tRNA synthetase family. In terms of assembly, monomer. Requires Zn(2+) as cofactor.

It is found in the cytoplasm. The enzyme catalyses tRNA(Cys) + L-cysteine + ATP = L-cysteinyl-tRNA(Cys) + AMP + diphosphate. The protein is Cysteine--tRNA ligase of Shewanella oneidensis (strain ATCC 700550 / JCM 31522 / CIP 106686 / LMG 19005 / NCIMB 14063 / MR-1).